Here is a 196-residue protein sequence, read N- to C-terminus: Small ribosomal subunit protein uS4c (196 aa).

The interval 17–36 is disordered; sequence ALPGLTRKTPKSGSNLKKKF. An S4 RNA-binding domain is found at 89 to 150; the sequence is MRLDNIVFRL…NQRSKRLVQN (62 aa).

Belongs to the universal ribosomal protein uS4 family. As to quaternary structure, part of the 30S ribosomal subunit. Contacts protein S5. The interaction surface between S4 and S5 is involved in control of translational fidelity.

The protein resides in the plastid. It is found in the chloroplast. One of the primary rRNA binding proteins, it binds directly to 16S rRNA where it nucleates assembly of the body of the 30S subunit. Functionally, with S5 and S12 plays an important role in translational accuracy. The sequence is that of Small ribosomal subunit protein uS4c (rps4) from Tragus racemosus (Carrot grass).